Reading from the N-terminus, the 211-residue chain is Dephospho-CoA kinase (211 aa).

The 204-residue stretch at 3-206 (VIGLTGGIAT…GGRGRRLPNA (204 aa)) folds into the DPCK domain. 11–16 (ATGKST) provides a ligand contact to ATP.

The protein belongs to the CoaE family.

It localises to the cytoplasm. The catalysed reaction is 3'-dephospho-CoA + ATP = ADP + CoA + H(+). It functions in the pathway cofactor biosynthesis; coenzyme A biosynthesis; CoA from (R)-pantothenate: step 5/5. Its function is as follows. Catalyzes the phosphorylation of the 3'-hydroxyl group of dephosphocoenzyme A to form coenzyme A. The protein is Dephospho-CoA kinase of Anaeromyxobacter dehalogenans (strain 2CP-C).